A 358-amino-acid polypeptide reads, in one-letter code: Aerobic magnesium-protoporphyrin IX monomethyl ester [oxidative] cyclase (358 aa).

It belongs to the AcsF family. The cofactor is Fe cation.

The catalysed reaction is Mg-protoporphyrin IX 13-monomethyl ester + 3 NADPH + 3 O2 + 2 H(+) = 3,8-divinyl protochlorophyllide a + 3 NADP(+) + 5 H2O. Its pathway is porphyrin-containing compound metabolism; chlorophyll biosynthesis. Its function is as follows. Catalyzes the formation of the isocyclic ring in chlorophyll biosynthesis in aerobic conditions. Mediates the cyclase reaction, which results in the formation of divinylprotochlorophyllide (Pchlide) characteristic of all chlorophylls from magnesium-protoporphyrin IX 13-monomethyl ester (MgPMME). The protein is Aerobic magnesium-protoporphyrin IX monomethyl ester [oxidative] cyclase of Rubrivivax gelatinosus (Rhodocyclus gelatinosus).